The sequence spans 309 residues: uncharacterized protein (309 aa).

Pro residues-rich tracts occupy residues 1 to 17 (MTSRAPSPPTPPCPSPP) and 24 to 51 (SPVPTATPASPPLKPLSNPLPPPPPTPR). Disordered regions lie at residues 1–174 (MTSR…PPGV) and 216–240 (PPDLPSPPLSPPLSPPLSPISPLHA). Low complexity predominate over residues 67–83 (LRSSPSSALNASRGAPS). Positions 84–112 (TSPPPSSSPPSSPASTPPSRTPSPTPTAP) are enriched in pro residues. 2 stretches are compositionally biased toward low complexity: residues 113–125 (ASPVASTAMTPAS) and 135–144 (APSSSAALSS). Pro residues predominate over residues 160–174 (PPPPLPPPLQPPPGV). The helical transmembrane segment at 278-298 (LFLLFTLLSIHFSPFPIFILL) threads the bilayer.

Its subcellular location is the host membrane. This is an uncharacterized protein from Vitis vinifera (Grape).